We begin with the raw amino-acid sequence, 348 residues long: MNGTEGPNFYVPYSNKSGVVRSPYEEPQYYLAEPWMFSCLAAYMFMLIVLGFPINFLTLYVTIQHKKLRTPLNYILLNLAVADLFMVICGFTTTLVTSLNGYFVFGTTGCLVEGFFATTGGEVALWALVVLAIERYIVVCKPMSNFRFGENHAIMGVAFTWIMALACSVPPIFGWSRYIPEGMQCSCGIDYYTLNPEFNNESFVIYMFVVHFIIPLTVIFFCYGQLVFTVKEAAAQQQESATTQKAEKEVTRMVIIMVIAFLICWVPYASVAFYIFTHQGSDFGPIFMTLPAFFAKSSSIYNPVIYIMMNKQFRNCMITTLCCGKNPLGDDEASTTASKTETSQVAPA.

M1 is modified (N-acetylmethionine). At M1–M36 the chain is on the extracellular side. N2 and N15 each carry an N-linked (GlcNAc...) asparagine glycan. Residues F37–V61 traverse the membrane as a helical segment. The Cytoplasmic portion of the chain corresponds to T62–N73. Residues Y74–V96 form a helical membrane-spanning segment. Residues T97 to C110 lie on the Extracellular side of the membrane. C110 and C187 are oxidised to a cystine. A helical membrane pass occupies residues L111 to I133. The 'Ionic lock' involved in activated form stabilization signature appears at E134–Y136. At E134 to H152 the chain is on the cytoplasmic side. Residues A153–F173 traverse the membrane as a helical segment. At G174–S202 the chain is on the extracellular side. E201 contributes to the Zn(2+) binding site. Residues F203–G224 form a helical membrane-spanning segment. Residues Q225 to R252 lie on the Cytoplasmic side of the membrane. The helical transmembrane segment at M253–Y274 threads the bilayer. The Extracellular portion of the chain corresponds to I275 to I286. Q279 contributes to the Zn(2+) binding site. A helical membrane pass occupies residues F287 to M308. K296 bears the N6-(retinylidene)lysine mark. Over M309 to A348 the chain is Cytoplasmic. S-palmitoyl cysteine attachment occurs at residues C322 and C323. Residues D330–A348 form an interaction with SAG region. S334 carries the phosphoserine modification. 2 positions are modified to phosphothreonine: T335 and T336. S338 carries the phosphoserine modification. 2 positions are modified to phosphothreonine: T340 and T342. Position 343 is a phosphoserine (S343).

It belongs to the G-protein coupled receptor 1 family. Opsin subfamily. As to quaternary structure, homodimer. May form a complex composed of RHO, GRK1 and RCVRN in a Ca(2+)-dependent manner; RCVRN prevents the interaction between GRK1 and RHO. Interacts with GRK1. Interacts (phosphorylated form) with SAG. Interacts with GNAT1. Interacts with GNAT3. SAG and G-proteins compete for a common binding site. Interacts with PRCD; the interaction promotes PRCD stability. Forms a complex with ASAP1 and ARF4. Forms a complex with ASAP1, RAB11A, Rabin8/RAB3IP, ARF4 and RAB11FIP3; the complex regulates Golgi-to-cilia rhodopsin/RHO transport in photoreceptors. Phosphorylated on some or all of the serine and threonine residues present in the C-terminal region. In terms of processing, contains one covalently linked retinal chromophore. Upon light absorption, the covalently bound 11-cis-retinal is converted to all-trans-retinal. After hydrolysis of the Schiff base and release of the covalently bound all-trans-retinal, active rhodopsin is regenerated by binding of a fresh molecule of 11-cis-retinal.

The protein resides in the membrane. Its subcellular location is the cell projection. The protein localises to the cilium. It localises to the photoreceptor outer segment. In terms of biological role, photoreceptor required for image-forming vision at low light intensity. Required for photoreceptor cell viability after birth. Light-induced isomerization of 11-cis to all-trans retinal triggers a conformational change that activates signaling via G-proteins. Subsequent receptor phosphorylation mediates displacement of the bound G-protein alpha subunit by the arrestin SAG and terminates signaling. The chain is Rhodopsin (RHO) from Sminthopsis crassicaudata (Fat-tailed dunnart).